Consider the following 280-residue polypeptide: Large ribosomal subunit protein uL2cz/uL2cy (280 aa).

Disordered regions lie at residues 1–25 (MAIH…VKSN) and 231–280 (PVDH…RRTK).

Belongs to the universal ribosomal protein uL2 family. Part of the 50S ribosomal subunit.

It is found in the plastid. The protein localises to the chloroplast. This Platanus occidentalis (Sycamore) protein is Large ribosomal subunit protein uL2cz/uL2cy (rpl2-A).